The primary structure comprises 584 residues: Cationic amino acid transporter 7, chloroplastic (584 aa).

The transit peptide at 1–49 (MEAQYRNHDGDTSFSSLRVYLNSLSDTPSRFSRRAVSVSTSYDEMSRVR) directs the protein to the chloroplast. Transmembrane regions (helical) follow at residues 62 to 82 (WYDL…FVTT), 90 to 110 (AGPS…LSAF), 131 to 151 (ITFG…DYVL), 185 to 205 (GFNE…FVIC), 214 to 234 (VNMV…VMGF), 254 to 274 (FFPF…LSYI), 293 to 313 (IPMG…LMAI), 346 to 366 (VVGI…MLGQ), 396 to 416 (ASAF…LNVL), 417 to 437 (LNLV…AVIF), 449 to 469 (WPTL…TLVW), 480 to 500 (FILG…HCVV), 508 to 528 (FWGV…NIFL), and 540 to 560 (FGFF…HASY).

It belongs to the amino acid-polyamine-organocation (APC) superfamily. Cationic amino acid transporter (CAT) (TC 2.A.3.3) family.

The protein localises to the plastid. The protein resides in the chloroplast membrane. Functionally, permease involved in the transport of the cationic amino acids. This Arabidopsis thaliana (Mouse-ear cress) protein is Cationic amino acid transporter 7, chloroplastic (CAT7).